The following is a 211-amino-acid chain: Large ribosomal subunit protein uL4 (211 aa).

Residues 44–94 (RSGNHATKTRSEVRGGGKKPWSQKGTGHARQGSTRAPHWVGGGTVHGPQKR) are disordered.

The protein belongs to the universal ribosomal protein uL4 family. In terms of assembly, part of the 50S ribosomal subunit.

Functionally, one of the primary rRNA binding proteins, this protein initially binds near the 5'-end of the 23S rRNA. It is important during the early stages of 50S assembly. It makes multiple contacts with different domains of the 23S rRNA in the assembled 50S subunit and ribosome. In terms of biological role, forms part of the polypeptide exit tunnel. The chain is Large ribosomal subunit protein uL4 from Leptospira borgpetersenii serovar Hardjo-bovis (strain JB197).